The chain runs to 487 residues: Chromosomal replication initiator protein DnaA (487 aa).

Residues 1-79 (MEKSKNIWSL…GYNNIVIVFT (79 aa)) form a domain I, interacts with DnaA modulators region. A domain II region spans residues 79–142 (TNQPPKTHSN…EEEPTNFKNP (64 aa)). Residues 143 to 359 (FLKKRYTFEN…AAVTKLKAYI (217 aa)) form a domain III, AAA+ region region. Residues glycine 187, glycine 189, lysine 190, and threonine 191 each coordinate ATP. The segment at 360-487 (DLDNIEIDIE…TELMNKIKKN (128 aa)) is domain IV, binds dsDNA.

Belongs to the DnaA family. As to quaternary structure, oligomerizes as a right-handed, spiral filament on DNA at oriC.

The protein resides in the cytoplasm. In terms of biological role, plays an essential role in the initiation and regulation of chromosomal replication. ATP-DnaA binds to the origin of replication (oriC) to initiate formation of the DNA replication initiation complex once per cell cycle. Binds the DnaA box (a 9 base pair repeat at the origin) and separates the double-stranded (ds)DNA. Forms a right-handed helical filament on oriC DNA; dsDNA binds to the exterior of the filament while single-stranded (ss)DNA is stabiized in the filament's interior. The ATP-DnaA-oriC complex binds and stabilizes one strand of the AT-rich DNA unwinding element (DUE), permitting loading of DNA polymerase. After initiation quickly degrades to an ADP-DnaA complex that is not apt for DNA replication. Binds acidic phospholipids. The protein is Chromosomal replication initiator protein DnaA of Borreliella burgdorferi (strain ZS7) (Borrelia burgdorferi).